Here is a 173-residue protein sequence, read N- to C-terminus: Acetyl-CoA decarbonylase/synthase complex subunit epsilon (173 aa).

It belongs to the CdhB family. In terms of assembly, heterotetramer of two alpha and two epsilon subunits. The ACDS complex is made up of alpha, epsilon, beta, gamma and delta subunits with a probable stoichiometry of (alpha(2)epsilon(2))(4)-beta(8)-(gamma(1)delta(1))(8).

Its pathway is one-carbon metabolism; methanogenesis from acetate. Functionally, part of a complex that catalyzes the reversible cleavage of acetyl-CoA, allowing growth on acetate as sole source of carbon and energy. The alpha-epsilon subcomponent functions as a carbon monoxide dehydrogenase. The precise role of the epsilon subunit is unclear; it may have a stabilizing role within the alpha(2)epsilon(2) component and/or be involved in electron transfer to FAD during a potential FAD-mediated CO oxidation. The chain is Acetyl-CoA decarbonylase/synthase complex subunit epsilon from Methanothermobacter thermautotrophicus (strain ATCC 29096 / DSM 1053 / JCM 10044 / NBRC 100330 / Delta H) (Methanobacterium thermoautotrophicum).